The primary structure comprises 370 residues: Protein SUPPRESSOR OF NIM1 1 (370 aa).

The F-box domain maps to methionine 1–histidine 43.

As to expression, ubiquitous, at low levels.

Its function is as follows. Negatively regulates a plant defense signaling pathway which is independent of salicylic acid (SA) and systemic acquired resistance (SAR). Confers sensitivity to P.syringae and P.parasitica. In Arabidopsis thaliana (Mouse-ear cress), this protein is Protein SUPPRESSOR OF NIM1 1 (SON1).